The sequence spans 159 residues: MDFRIGQGYDVHALVPGRPLIIGGVTIPYERGLLGHSDADVLLHAITDAIFGAAAMGDIGRHFSDTDAKFAGADSRVLLRECFARVKAAGFSIANVDSSVVAQAPKLAPHIEGMRANIAADLGLPVERVNVKAKTNEKLGYLGRGEGIEAQAAVLLIKN.

2 residues coordinate a divalent metal cation: D10 and H12. 4-CDP-2-C-methyl-D-erythritol 2-phosphate contacts are provided by residues 10–12 (DVH) and 36–37 (HS). H44 is a binding site for a divalent metal cation. Residues 58 to 60 (DIG), 63 to 67 (FSDTD), and R144 each bind 4-CDP-2-C-methyl-D-erythritol 2-phosphate.

The protein belongs to the IspF family. In terms of assembly, homotrimer. Requires a divalent metal cation as cofactor.

It carries out the reaction 4-CDP-2-C-methyl-D-erythritol 2-phosphate = 2-C-methyl-D-erythritol 2,4-cyclic diphosphate + CMP. It functions in the pathway isoprenoid biosynthesis; isopentenyl diphosphate biosynthesis via DXP pathway; isopentenyl diphosphate from 1-deoxy-D-xylulose 5-phosphate: step 4/6. Functionally, involved in the biosynthesis of isopentenyl diphosphate (IPP) and dimethylallyl diphosphate (DMAPP), two major building blocks of isoprenoid compounds. Catalyzes the conversion of 4-diphosphocytidyl-2-C-methyl-D-erythritol 2-phosphate (CDP-ME2P) to 2-C-methyl-D-erythritol 2,4-cyclodiphosphate (ME-CPP) with a corresponding release of cytidine 5-monophosphate (CMP). The protein is 2-C-methyl-D-erythritol 2,4-cyclodiphosphate synthase of Paraburkholderia phytofirmans (strain DSM 17436 / LMG 22146 / PsJN) (Burkholderia phytofirmans).